A 338-amino-acid polypeptide reads, in one-letter code: Isopenicillin N synthase (338 aa).

4 residues coordinate isopenicillin N: arginine 89, tyrosine 93, serine 185, and tyrosine 191. The N-[(5S)-5-amino-5-carboxypentanoyl]-L-cysteinyl-D-valine site is built by arginine 89, tyrosine 93, serine 185, tyrosine 191, histidine 216, and aspartate 218. The 109-residue stretch at 182-290 (TLSSVVLIRY…RQSLPFFVNL (109 aa)) folds into the Fe2OG dioxygenase domain. The Fe(2+) site is built by histidine 216, aspartate 218, and histidine 272. Arginine 281 is a 2-oxoglutarate binding site. Serine 283 is an isopenicillin N binding site. Serine 283 is an N-[(5S)-5-amino-5-carboxypentanoyl]-L-cysteinyl-D-valine binding site.

The protein belongs to the iron/ascorbate-dependent oxidoreductase family. Monomer. Fe(2+) serves as cofactor.

It localises to the cytoplasm. It is found in the cytosol. The catalysed reaction is N-[(5S)-5-amino-5-carboxypentanoyl]-L-cysteinyl-D-valine + O2 = isopenicillin N + 2 H2O. It functions in the pathway antibiotic biosynthesis; penicillin G biosynthesis; penicillin G from L-alpha-aminoadipate and L-cysteine and L-valine: step 2/3. Functionally, isopenicillin N synthase; part of the gene cluster that mediates the biosynthesis of penicillin, the world's most important antibiotic. IpnA catalyzes the cyclization of the tripeptide N-[(5S)-5-amino-5-carboxypentanoyl]-L-cysteinyl-D-valine (LLD-ACV or ACV) to form isopenicillin N (IPN) that contains the beta-lactam nucleus. The penicillin biosynthesis occurs via 3 enzymatic steps, the first corresponding to the production of the tripeptide N-[(5S)-5-amino-5-carboxypentanoyl]-L-cysteinyl-D-valine (LLD-ACV or ACV) by the NRPS pcbAB. The tripeptide ACV is then cyclized to isopenicillin N (IPN) by the isopenicillin N synthase pcbC that forms the beta-lactam nucleus. Finally, the alpha-aminoadipyl side chain is exchanged for phenylacetic acid by the isopenicillin N acyltransferase penDE to yield penicillin in the peroxisomal matrix. This is Isopenicillin N synthase (PCBC) from Hapsidospora chrysogena (Acremonium chrysogenum).